A 99-amino-acid chain; its full sequence is NADH dehydrogenase [ubiquinone] 1 alpha subcomplex subunit 2 (99 aa).

Ala2 is modified (N-acetylalanine). Cys24 and Cys58 are joined by a disulfide. Lys64 carries the N6-acetyllysine; alternate modification. Lys64 carries the N6-succinyllysine; alternate modification. Residue Lys75 is modified to N6-acetyllysine.

Belongs to the complex I NDUFA2 subunit family. As to quaternary structure, complex I is composed of 45 different subunits.

It is found in the mitochondrion inner membrane. Functionally, accessory subunit of the mitochondrial membrane respiratory chain NADH dehydrogenase (Complex I), that is believed not to be involved in catalysis. Complex I functions in the transfer of electrons from NADH to the respiratory chain. The immediate electron acceptor for the enzyme is believed to be ubiquinone. In Bos taurus (Bovine), this protein is NADH dehydrogenase [ubiquinone] 1 alpha subcomplex subunit 2 (NDUFA2).